A 293-amino-acid polypeptide reads, in one-letter code: Indole-3-glycerol phosphate synthase (293 aa).

Belongs to the TrpC family.

The catalysed reaction is 1-(2-carboxyphenylamino)-1-deoxy-D-ribulose 5-phosphate + H(+) = (1S,2R)-1-C-(indol-3-yl)glycerol 3-phosphate + CO2 + H2O. It participates in amino-acid biosynthesis; L-tryptophan biosynthesis; L-tryptophan from chorismate: step 4/5. The sequence is that of Indole-3-glycerol phosphate synthase from Rippkaea orientalis (strain PCC 8801 / RF-1) (Cyanothece sp. (strain PCC 8801)).